Reading from the N-terminus, the 111-residue chain is Small ribosomal subunit protein bS16 (111 aa).

Belongs to the bacterial ribosomal protein bS16 family.

The chain is Small ribosomal subunit protein bS16 from Rickettsia typhi (strain ATCC VR-144 / Wilmington).